A 389-amino-acid chain; its full sequence is Succinate--CoA ligase [ADP-forming] subunit beta (389 aa).

The region spanning 9 to 244 is the ATP-grasp domain; it reads KQLLAEYGIP…KTQEDETEVT (236 aa). ATP is bound by residues lysine 46, 53–55, glycine 102, and glutamate 107; that span reads GRG. Residues asparagine 199 and aspartate 213 each coordinate Mg(2+). Substrate contacts are provided by residues asparagine 264 and 321 to 323; that span reads GIV.

The protein belongs to the succinate/malate CoA ligase beta subunit family. In terms of assembly, heterotetramer of two alpha and two beta subunits. Mg(2+) serves as cofactor.

It carries out the reaction succinate + ATP + CoA = succinyl-CoA + ADP + phosphate. The catalysed reaction is GTP + succinate + CoA = succinyl-CoA + GDP + phosphate. The protein operates within carbohydrate metabolism; tricarboxylic acid cycle; succinate from succinyl-CoA (ligase route): step 1/1. Functionally, succinyl-CoA synthetase functions in the citric acid cycle (TCA), coupling the hydrolysis of succinyl-CoA to the synthesis of either ATP or GTP and thus represents the only step of substrate-level phosphorylation in the TCA. The beta subunit provides nucleotide specificity of the enzyme and binds the substrate succinate, while the binding sites for coenzyme A and phosphate are found in the alpha subunit. The sequence is that of Succinate--CoA ligase [ADP-forming] subunit beta from Xanthomonas oryzae pv. oryzae (strain MAFF 311018).